Reading from the N-terminus, the 146-residue chain is Snaclec agkisacutacin subunit B (146 aa).

A signal peptide spans 1–23; sequence MGRFIFVSFGLLVVFLSLSGTAA. Residues 24–146 enclose the C-type lectin domain; the sequence is DCPSDWSSYE…TCSFVCKFQA (123 aa). 3 disulfides stabilise this stretch: Cys-25-Cys-36, Cys-53-Cys-142, and Cys-119-Cys-134. Ca(2+) contacts are provided by Ser-64 and Glu-70.

This sequence belongs to the snaclec family. In terms of assembly, heterodimer of subunits A and B; disulfide-linked. In terms of tissue distribution, expressed by the venom gland.

Its subcellular location is the secreted. Its function is as follows. Anticoagulant protein which binds to the gamma-carboxyglutamic acid-domain regions of factor IX (F9) and factor X (F10) in the presence of calcium with a 1 to 1 stoichiometry. Also inhibits platelet aggregation by binding to platelet glycoprotein Ibalpha (GP1BA) and functioning as a blocker of von Willebrand factor (VWF). Is devoid of hemorrhagic and lethal activities. Possesses antithrombotic and thrombolytic activities. Also hydrolyzes the Aalpha-chain of fibrinogen (FGA). Does not affect the Bbeta-chain (FGB) and the gamma chain (FGG). This Deinagkistrodon acutus (Hundred-pace snake) protein is Snaclec agkisacutacin subunit B.